The sequence spans 200 residues: Potassium-transporting ATPase KdpC subunit (200 aa).

A helical transmembrane segment spans residues 13-33; the sequence is ITLIFWLITAIIYPLAILVVG.

This sequence belongs to the KdpC family. The system is composed of three essential subunits: KdpA, KdpB and KdpC.

It localises to the cell membrane. Part of the high-affinity ATP-driven potassium transport (or Kdp) system, which catalyzes the hydrolysis of ATP coupled with the electrogenic transport of potassium into the cytoplasm. This subunit acts as a catalytic chaperone that increases the ATP-binding affinity of the ATP-hydrolyzing subunit KdpB by the formation of a transient KdpB/KdpC/ATP ternary complex. This Anabaena sp. (strain L31) protein is Potassium-transporting ATPase KdpC subunit.